We begin with the raw amino-acid sequence, 591 residues long: MMRSHYCGALNRSHVGQTVTLSGWVHRVRNLGRFIFMQIRDREGIVQVFFDEKDEAIFKIASSLRSEACVQIQGEVIARDESQINKEMATGEIEVLVKNVVVYNNADVLPLDFNQNNTEEQRLKYRYLDLRRPEMAEKLKTRAKITSFVRRYMDDNGFLDIETPMLTKATPEGARDYLVPSRVHNGKFYALPQSPQLFKQLLMMSGFDRYYQIVKCFRDEDLRADRQPEFTQIDVETSFLTAEEVRELMENMIHGLWLDRLNVDLGKFPIMTWQEAMQRFGSDKPDLRNPLELVDVADILKDVEFKVFNEPANSADGRVTVLRVPNGASLTRKQIDEYTQFVGIYGAKGLAWAKINNVNAGMEGIQSPVAKFLNEEVFKALIERTNATSGDILFFGADKWQVVTDSMGALRLKVGRDLALTDLSAWKPLWVIDFPMFEKDDEGNLSAMHHPFTSPKNLTPEELAANPVNAVANAYDMVINGYEVGGGSVRIYDPKMQQTVFGILGINEQDQQEKFGFLLDALKFGTPPHAGLAFGLDRLTMLITGTENIRDVIAFPKTTAAACLMTEAPSFANPQALEELGIAVLKKEKAE.

Position 172 (E172) interacts with L-aspartate. Positions 196–199 (QLFK) are aspartate. R218 serves as a coordination point for L-aspartate. ATP-binding positions include 218-220 (RDE) and Q227. H449 lines the L-aspartate pocket. E483 provides a ligand contact to ATP. R490 serves as a coordination point for L-aspartate. An ATP-binding site is contributed by 535–538 (GLDR).

The protein belongs to the class-II aminoacyl-tRNA synthetase family. Type 1 subfamily. In terms of assembly, homodimer.

It is found in the cytoplasm. The enzyme catalyses tRNA(Asp) + L-aspartate + ATP = L-aspartyl-tRNA(Asp) + AMP + diphosphate. Its function is as follows. Catalyzes the attachment of L-aspartate to tRNA(Asp) in a two-step reaction: L-aspartate is first activated by ATP to form Asp-AMP and then transferred to the acceptor end of tRNA(Asp). This Actinobacillus pleuropneumoniae serotype 5b (strain L20) protein is Aspartate--tRNA ligase.